Here is a 417-residue protein sequence, read N- to C-terminus: RH-like protein ID (417 aa).

The next 11 helical transmembrane spans lie at 12–32, 44–64, 77–97, 125–145, 172–192, 203–223, 238–258, 265–285, 287–307, 331–351, and 358–378; these read CLPL…YFFT, LVAS…GFGF, VAFN…LDGF, ISAG…MVLV, IYVF…KPLA, TIPS…WPSF, VFNT…VSSL, INMT…ATSC, LIPS…ISIG, NFSL…VLDT, and MVGF…VIAL.

It belongs to the ammonium transporter (TC 2.A.49) family. Rh subfamily.

It is found in the membrane. May be part of an oligomeric complex which is likely to have a transport or channel function in the erythrocyte membrane. This is RH-like protein ID from Gorilla gorilla gorilla (Western lowland gorilla).